The primary structure comprises 346 residues: Oxidoreductase calI (346 aa).

Residues 11–33 (VSTPQGRGDGRPTADQVLRDQDP) are disordered. The segment covering 18-32 (GDGRPTADQVLRDQD) has biased composition (basic and acidic residues). NADP(+) is bound by residues L52, K76, D100, and N128. The active-site Proton donor is S181. Positions 208, 212, and 241 each coordinate NADP(+). Residue Y208 is the Proton acceptor of the active site. Residue K212 is the Lowers pKa of active site Tyr of the active site.

This sequence belongs to the short-chain dehydrogenases/reductases (SDR) family.

Its pathway is secondary metabolite biosynthesis. In terms of biological role, oxidoreductase; part of the gene cluster that mediates the biosynthesis of calbistrin A and related compounds. Calbistrin A is a secondary metabolite with an interesting structure that was recently found to have bioactivity against leukemia cells. It consists of two polyketides linked by an ester bond: a bicyclic decalin containing polyketide and a linear 12 carbon dioic acid structure. The polyketide synthase calA is probably responsible for forming the decalin moiety. Because calA lacks a designated enoylreductase (ER) domain, the required activity is provided by the trans-enoyl reductase calK. Following release from the PKS, calF then probably catalyzes the oxidation and the subsequent Diels Alder cycloisomerization that lead to the formation of the decalin moiety. The decalin polyketide backbone includes two C-methyl groups, at C7 and C11 in backbone, of which the C7 position is probably methylated by the methyltransferase domain of calA. A candidate for adding the methyl group at C11, if not done by CalA, is the cluster methyltransferase calH. Several additional tailoring enzymes within the cluster could be involved in the modification of the decalin polyketide product. Those include the 3 cytochrome P450 monooxygenases CalE, CalG and CalL, of which one might be responsible for the introduction of the extra hydroxyl group attached to the backbone of the decalin moiety, at position C9 in the backbone, that allows for attachment of the linear moiety. One tailoring enzyme activity that is expected to be involved in biosynthesis of calbistrin is an acyltransferase for connecting the two polyketide synthase products, and which could be performed by the cluster acyltransferase calJ. The enzyme responsible for the biosynthesis of the linear moiety, probably a second PKS, has not been identified yet. This chain is Oxidoreductase calI, found in Penicillium decumbens.